Consider the following 617-residue polypeptide: Membrane protein insertase YidC (617 aa).

The chain crosses the membrane as a helical span at residues 8–28 (MFVAIGLSLLVLLGWQYFVAG). Residues 36-49 (QIEAQNKAAQQQPP) are compositionally biased toward polar residues. The disordered stretch occupies residues 36-91 (QIEAQNKAAQQQPPGVTPDGVPSPSPKEGGPAAPAPGTLPTAQGGPVSREAALARS). The span at 61-81 (PKEGGPAAPAPGTLPTAQGGP) shows a compositional bias: low complexity. The next 4 membrane-spanning stretches (helical) occupy residues 387 to 407 (LFGN…LLFL), 461 to 481 (WPVL…FITI), 517 to 533 (FVHL…TMFV), and 549 to 569 (IFTF…AGLV).

This sequence belongs to the OXA1/ALB3/YidC family. Type 1 subfamily. In terms of assembly, interacts with the Sec translocase complex via SecD. Specifically interacts with transmembrane segments of nascent integral membrane proteins during membrane integration.

Its subcellular location is the cell inner membrane. Its function is as follows. Required for the insertion and/or proper folding and/or complex formation of integral membrane proteins into the membrane. Involved in integration of membrane proteins that insert both dependently and independently of the Sec translocase complex, as well as at least some lipoproteins. Aids folding of multispanning membrane proteins. This is Membrane protein insertase YidC from Methylobacterium radiotolerans (strain ATCC 27329 / DSM 1819 / JCM 2831 / NBRC 15690 / NCIMB 10815 / 0-1).